The sequence spans 343 residues: Lipase chaperone (343 aa).

Residues 7–27 (IYLGIGLVALLMIFIYWLMPK) traverse the membrane as a helical segment.

This sequence belongs to the lipase chaperone family.

It localises to the cell inner membrane. In terms of biological role, may be involved in the folding of the extracellular lipase during its passage through the periplasm. In Acinetobacter baylyi (strain ATCC 33305 / BD413 / ADP1), this protein is Lipase chaperone (lifO).